A 38-amino-acid chain; its full sequence is Large ribosomal subunit protein bL36 (38 aa).

This sequence belongs to the bacterial ribosomal protein bL36 family.

In Karelsulcia muelleri (strain GWSS) (Sulcia muelleri), this protein is Large ribosomal subunit protein bL36.